An 812-amino-acid polypeptide reads, in one-letter code: Plasminogen (812 aa).

An N-terminal signal peptide occupies residues 1-19 (MDHKEIILLFLLFLKPGQG). One can recognise a PAN domain in the interval 20 to 98 (DSLDGYVSTQ…RDVILFEKRV (79 aa)). 21 disulfides stabilise this stretch: cysteine 49-cysteine 73, cysteine 53-cysteine 61, cysteine 103-cysteine 181, cysteine 124-cysteine 164, cysteine 152-cysteine 176, cysteine 185-cysteine 262, cysteine 188-cysteine 316, cysteine 206-cysteine 245, cysteine 234-cysteine 257, cysteine 275-cysteine 352, cysteine 296-cysteine 335, cysteine 324-cysteine 347, cysteine 376-cysteine 454, cysteine 397-cysteine 437, cysteine 425-cysteine 449, cysteine 481-cysteine 560, cysteine 502-cysteine 543, cysteine 531-cysteine 555, cysteine 568-cysteine 687, cysteine 578-cysteine 586, and cysteine 609-cysteine 625. 5 Kringle domains span residues 102–181 (ECKT…IPEC), 184–262 (ECMY…IPRC), 274–352 (QCLK…IPSC), 375–454 (ECYQ…LKRC), and 480–560 (DCMY…IPLC). The 229-residue stretch at 582–810 (VVGGCVANPH…YVNWIEREMR (229 aa)) folds into the Peptidase S1 domain. Serine 598 carries the post-translational modification Phosphoserine. Catalysis depends on charge relay system residues histidine 624 and aspartate 667. Residue serine 690 is modified to Phosphoserine. Intrachain disulfides connect cysteine 701–cysteine 768, cysteine 731–cysteine 747, and cysteine 758–cysteine 786. Residue serine 762 is the Charge relay system of the active site.

It belongs to the peptidase S1 family. Plasminogen subfamily. Interacts (both mature PLG and the angiostatin peptide) with AMOT and CSPG4. Interacts (via the Kringle domains) with HRG; the interaction tethers PLG to the cell surface and enhances its activation. Interacts (via Kringle 4 domain) with ADA; the interaction stimulates PLG activation when in complex with DPP4. Angiostatin: Interacts with ATP5F1A; the interaction inhibits most of the angiogenic effects of angiostatin. In terms of processing, in the presence of the inhibitor, the activation involves only cleavage after Arg-581, yielding two chains held together by two disulfide bonds. In the absence of the inhibitor, the activation involves additionally the removal of the activation peptide.

Its subcellular location is the secreted. The catalysed reaction is Preferential cleavage: Lys-|-Xaa &gt; Arg-|-Xaa, higher selectivity than trypsin. Converts fibrin into soluble products.. Converted into plasmin by plasminogen activators, both plasminogen and its activator being bound to fibrin. Cannot be activated with streptokinase. Functionally, plasmin dissolves the fibrin of blood clots and acts as a proteolytic factor in a variety of other processes including embryonic development, tissue remodeling, tumor invasion, and inflammation. In ovulation, weakens the walls of the Graafian follicle. It activates the urokinase-type plasminogen activator, collagenases and several complement zymogens, such as C1, C4 and C5. Cleavage of fibronectin and laminin leads to cell detachment and apoptosis. Also cleaves fibrin, thrombospondin and von Willebrand factor. Its role in tissue remodeling and tumor invasion may be modulated by CSPG4. Binds to cells. Its function is as follows. Angiostatin is an angiogenesis inhibitor that blocks neovascularization and growth of experimental primary and metastatic tumors in vivo. This is Plasminogen (Plg) from Rattus norvegicus (Rat).